The sequence spans 248 residues: Granulin (248 aa).

This sequence belongs to the polyhedrin family.

Its function is as follows. Component of the virus occlusion bodies, which are large proteinaceous structures, that protect the virus from the outside environment for extended periods until they are ingested by insect larvae. This Zygaenidae (burnets) protein is Granulin.